The following is a 1052-amino-acid chain: Error-prone DNA polymerase (1052 aa).

This sequence belongs to the DNA polymerase type-C family. DnaE2 subfamily.

Its subcellular location is the cytoplasm. It carries out the reaction DNA(n) + a 2'-deoxyribonucleoside 5'-triphosphate = DNA(n+1) + diphosphate. In terms of biological role, DNA polymerase involved in damage-induced mutagenesis and translesion synthesis (TLS). It is not the major replicative DNA polymerase. In Bordetella parapertussis (strain 12822 / ATCC BAA-587 / NCTC 13253), this protein is Error-prone DNA polymerase.